The primary structure comprises 514 residues: Maturase K (514 aa).

The protein belongs to the intron maturase 2 family. MatK subfamily.

It localises to the plastid. The protein localises to the chloroplast. In terms of biological role, usually encoded in the trnK tRNA gene intron. Probably assists in splicing its own and other chloroplast group II introns. The protein is Maturase K of Acer palmatum (Japanese maple).